A 746-amino-acid chain; its full sequence is GTPase-activating protein GYP7 (746 aa).

Residues Ser265 and Ser339 each carry the phosphoserine modification. Residues 385-633 (LENDSLRGKV…HIWENFWTFY (249 aa)) form the Rab-GAP TBC domain. The disordered stretch occupies residues 470–505 (TIDGLPPPPQQLPANENNSTSPESANDESDDADDGV). Positions 481-491 (LPANENNSTSP) are enriched in polar residues.

It localises to the cytoplasm. GTPase-activating protein (GAP) that most effectively accelerates the intrinsic GTPase activity of Ypt/Rab-type GTPase YPT7 involved in vacuole docking and fusion. It is also active, but to a lesser extent, on YPT31, YPT32, YPT1, YPT6 and SEC4. Provides a catalytic arginine (arginine finger) in trans to accelerate the GTP hydrolysis rate of the substrate GTPase. The polypeptide is GTPase-activating protein GYP7 (GYP7) (Saccharomyces cerevisiae (strain ATCC 204508 / S288c) (Baker's yeast)).